Consider the following 455-residue polypeptide: Zinc finger protein ZPR1 homolog (455 aa).

2 C4-type zinc fingers span residues 28–60 (CPVC…CPHC) and 247–279 (CPNC…CDRC).

This sequence belongs to the ZPR1 family.

Its subcellular location is the nucleus. This Caenorhabditis elegans protein is Zinc finger protein ZPR1 homolog.